Here is a 550-residue protein sequence, read N- to C-terminus: Acetyl-coenzyme A transporter 1 (550 aa).

Composition is skewed to basic and acidic residues over residues 1-12 (MSPTISHKDSSR) and 36-52 (DDSR…REVL). Residues 1–58 (MSPTISHKDSSRQRRSGMFSHALDMKSGPLPPGGWDDSRRDSVGGEGDREVLLGDAGP) are disordered. The Cytoplasmic portion of the chain corresponds to 1-74 (MSPTISHKDS…PRSYRSELSS (74 aa)). S42 is modified (phosphoserine). A helical membrane pass occupies residues 75–95 (ILLLLFLYVLQGIPLGLAGSI). The Extracellular portion of the chain corresponds to 96–113 (PLILQSKNVSYTDQAFFS). N103 carries N-linked (GlcNAc...) asparagine glycosylation. A helical transmembrane segment spans residues 114 to 134 (FVFWPFSLKLLWAPLVDAVYF). Topologically, residues 135–141 (KNFGRRK) are cytoplasmic. Residues 142–162 (SWLVPTQYTLGIFMIYLSTQV) form a helical membrane-spanning segment. Over 163–175 (DRLLGNIDGRTPD) the chain is Extracellular. The helical transmembrane segment at 176–196 (VVALTVTFFLFEFLAATQDIA) threads the bilayer. The Cytoplasmic segment spans residues 197 to 217 (VDGWALTMLSRENVGYASTCN). A helical transmembrane segment spans residues 218-238 (SVGQTAGYFLGNVLFLALESA). Residues 239-256 (DFCNKYLRFQPQPRGIVT) lie on the Extracellular side of the membrane. A helical membrane pass occupies residues 257-277 (LSDFLFFWGTVFLITTTLVAL). Over 278 to 300 (LKKENREASIVKEETQGITDTYK) the chain is Cytoplasmic. The helical transmembrane segment at 301–321 (LLFSIIKMPAVLAFCLLILTS) threads the bilayer. Over 322 to 344 (KIGFSAADAVTGLKLVEEGVPKE) the chain is Extracellular. The helical transmembrane segment at 345–365 (HLALLAVPMVPLQIILPLLIS) threads the bilayer. Residues 366-375 (KYTAGPQPLN) are Cytoplasmic-facing. The helical transmembrane segment at 376–396 (IFYKAMPYRLLLGLEYALLVW) threads the bilayer. At 397–405 (WTPKVEHQG) the chain is on the extracellular side. Residues 406–426 (GFPLYYYIIVLLSYALHQVTL) traverse the membrane as a helical segment. At 427-509 (YSMYVSIMAF…LGGSCVTALD (83 aa)) the chain is on the cytoplasmic side. A helical membrane pass occupies residues 510 to 530 (GYYVESIICVLIGFGWWFFLG). Topologically, residues 531-550 (PKFKKLQDEGPSSWKCKRNN) are extracellular.

It belongs to the SLC33A transporter family. As to quaternary structure, homodimerizes. In terms of tissue distribution, expressed in all adult tissues examined including brain, heart, kidney, liver and spleen, with maximum expression in liver and kidney.

The protein resides in the endoplasmic reticulum membrane. The enzyme catalyses acetyl-CoA(in) = acetyl-CoA(out). Its function is as follows. Acetyl-CoA transporter that mediates active acetyl-CoA import through the endoplasmic reticulum (ER) membrane into the ER lumen where specific ER-based acetyl-CoA:lysine acetyltransferases are responsible for the acetylation of ER-based protein substrate, such as BACE1. Necessary for O-acetylation of gangliosides. This Mus musculus (Mouse) protein is Acetyl-coenzyme A transporter 1 (Slc33a1).